A 540-amino-acid polypeptide reads, in one-letter code: Glucose-6-phosphate isomerase (540 aa).

Catalysis depends on Glu-346, which acts as the Proton donor. Catalysis depends on residues His-377 and Lys-505.

The protein belongs to the GPI family.

It is found in the cytoplasm. It catalyses the reaction alpha-D-glucose 6-phosphate = beta-D-fructose 6-phosphate. It functions in the pathway carbohydrate biosynthesis; gluconeogenesis. It participates in carbohydrate degradation; glycolysis; D-glyceraldehyde 3-phosphate and glycerone phosphate from D-glucose: step 2/4. Catalyzes the reversible isomerization of glucose-6-phosphate to fructose-6-phosphate. The polypeptide is Glucose-6-phosphate isomerase (Francisella tularensis subsp. tularensis (strain WY96-3418)).